The sequence spans 373 residues: Flagellar P-ring protein (373 aa).

Positions 1 to 27 (MPSFSPTLLKLAAAALSALLLSGVAAS) are cleaved as a signal peptide.

Belongs to the FlgI family. In terms of assembly, the basal body constitutes a major portion of the flagellar organelle and consists of four rings (L,P,S, and M) mounted on a central rod.

The protein resides in the periplasm. The protein localises to the bacterial flagellum basal body. Functionally, assembles around the rod to form the L-ring and probably protects the motor/basal body from shearing forces during rotation. The polypeptide is Flagellar P-ring protein (Rhodopseudomonas palustris (strain BisB5)).